Here is a 168-residue protein sequence, read N- to C-terminus: Large ribosomal subunit protein uL10 (168 aa).

The protein belongs to the universal ribosomal protein uL10 family. As to quaternary structure, part of the ribosomal stalk of the 50S ribosomal subunit. The N-terminus interacts with L11 and the large rRNA to form the base of the stalk. The C-terminus forms an elongated spine to which L12 dimers bind in a sequential fashion forming a multimeric L10(L12)X complex.

Forms part of the ribosomal stalk, playing a central role in the interaction of the ribosome with GTP-bound translation factors. This chain is Large ribosomal subunit protein uL10, found in Photorhabdus laumondii subsp. laumondii (strain DSM 15139 / CIP 105565 / TT01) (Photorhabdus luminescens subsp. laumondii).